The primary structure comprises 919 residues: Rho guanine nucleotide exchange factor 1 (919 aa).

Residues 39–230 (DQNSQFQSLE…SLYMRHLGVR (192 aa)) enclose the RGSL domain. The interval 247-402 (VMGNRRSDEP…PPGWRELVPS (156 aa)) is disordered. The span at 281 to 310 (DCRHLKVEVDEKPGPADRKGSLGISSRDRT) shows a compositional bias: basic and acidic residues. Over residues 363–379 (STEDNGETESPEPGDDG) the composition is skewed to acidic residues. At serine 372 the chain carries Phosphoserine. One can recognise a DH domain in the interval 414–603 (KRQEVISELL…REILHHVNQA (190 aa)). A PH domain is found at 645-758 (KLVHEGPLTW…WCALITETAG (114 aa)). Threonine 693 is modified (phosphothreonine). Tyrosine 736 is subject to Phosphotyrosine; by JAK2. 2 disordered regions span residues 761 to 800 (KVPA…PADA) and 839 to 865 (TEED…PTHT). The span at 775–787 (PSSTREPLLSSSE) shows a compositional bias: low complexity. Residues 864–893 (HTQEVEENLLSLEVVIKQLEELEEEFCRLR) adopt a coiled-coil conformation. Position 904 is a phosphoserine (serine 904).

In terms of assembly, interacts with RHOA, GNA12 and GNA13. Homooligomerizes through the coiled coil region. Interacts with CTNNAL1. May interact with CCPG1. Phosphorylated by PKCA. Angiotensin-2 induced Tyr-736 phosphorylation is mediated by JAK2.

The protein resides in the cytoplasm. Its subcellular location is the membrane. In terms of biological role, seems to play a role in the regulation of RhoA GTPase by guanine nucleotide-binding alpha-12 (GNA12) and alpha-13 (GNA13) subunits. Acts as a GTPase-activating protein (GAP) for GNA12 and GNA13, and as guanine nucleotide exchange factor (GEF) for RhoA GTPase. Activated G alpha 13/GNA13 stimulates the RhoGEF activity through interaction with the RGS-like domain. This GEF activity is inhibited by binding to activated GNA12. Mediates angiotensin-2-induced RhoA activation. In lymphoid follicles, may trigger activation of GNA13 as part of S1PR2-dependent signaling pathway that leads to inhibition of germinal center (GC) B cell growth and migration outside the GC niche. The protein is Rho guanine nucleotide exchange factor 1 (Arhgef1) of Rattus norvegicus (Rat).